Here is an 89-residue protein sequence, read N- to C-terminus: ATP synthase subunit c (89 aa).

2 helical membrane-spanning segments follow: residues Ile3–Ala23 and Phe53–Phe73.

Belongs to the ATPase C chain family. F-type ATPases have 2 components, F(1) - the catalytic core - and F(0) - the membrane proton channel. F(1) has five subunits: alpha(3), beta(3), gamma(1), delta(1), epsilon(1). F(0) has three main subunits: a(1), b(2) and c(10-14). The alpha and beta chains form an alternating ring which encloses part of the gamma chain. F(1) is attached to F(0) by a central stalk formed by the gamma and epsilon chains, while a peripheral stalk is formed by the delta and b chains.

It localises to the cell inner membrane. Its function is as follows. F(1)F(0) ATP synthase produces ATP from ADP in the presence of a proton or sodium gradient. F-type ATPases consist of two structural domains, F(1) containing the extramembraneous catalytic core and F(0) containing the membrane proton channel, linked together by a central stalk and a peripheral stalk. During catalysis, ATP synthesis in the catalytic domain of F(1) is coupled via a rotary mechanism of the central stalk subunits to proton translocation. Functionally, key component of the F(0) channel; it plays a direct role in translocation across the membrane. A homomeric c-ring of between 10-14 subunits forms the central stalk rotor element with the F(1) delta and epsilon subunits. This is ATP synthase subunit c from Verminephrobacter eiseniae (strain EF01-2).